We begin with the raw amino-acid sequence, 356 residues long: MSL complex subunit 3B (356 aa).

The MRG domain maps to 2–350; sequence EERTVTLEIP…SEVHYSTRNP (349 aa). Disordered regions lie at residues 135–210 and 225–247; these read TNRS…WQQD and KTPV…SPVF. The span at 142–156 shows a compositional bias: low complexity; the sequence is LSPSLRLLNPSRPQS. Composition is skewed to polar residues over residues 178 to 189 and 229 to 243; these read AVQSLRRSSPHT and HSRS…SQEG.

Its subcellular location is the nucleus. Functionally, probable non-catalytic component of the MSL histone acetyltransferase complex, a multiprotein complex that mediates the majority of histone H4 acetylation at 'Lys-16' (H4K16ac), an epigenetic mark that prevents chromatin compaction. The protein is MSL complex subunit 3B of Homo sapiens (Human).